The following is a 212-amino-acid chain: Dephospho-CoA kinase (212 aa).

Residues 3–207 form the DPCK domain; sequence IIGLTGGIAS…RHLADDPEPG (205 aa). Position 11–16 (11–16) interacts with ATP; that stretch reads ASGKST.

The protein belongs to the CoaE family.

The protein localises to the cytoplasm. The catalysed reaction is 3'-dephospho-CoA + ATP = ADP + CoA + H(+). Its pathway is cofactor biosynthesis; coenzyme A biosynthesis; CoA from (R)-pantothenate: step 5/5. Catalyzes the phosphorylation of the 3'-hydroxyl group of dephosphocoenzyme A to form coenzyme A. The protein is Dephospho-CoA kinase of Moorella thermoacetica (strain ATCC 39073 / JCM 9320).